Here is a 135-residue protein sequence, read N- to C-terminus: S-adenosylmethionine decarboxylase proenzyme (135 aa).

Serine 63 serves as the catalytic Schiff-base intermediate with substrate; via pyruvic acid. At serine 63 the chain carries Pyruvic acid (Ser); by autocatalysis. Catalysis depends on histidine 68, which acts as the Proton acceptor; for processing activity. Cysteine 83 serves as the catalytic Proton donor; for catalytic activity.

The protein belongs to the prokaryotic AdoMetDC family. Type 1 subfamily. As to quaternary structure, heterotetramer of two alpha and two beta chains arranged as a dimer of alpha/beta heterodimers. Pyruvate is required as a cofactor. In terms of processing, is synthesized initially as an inactive proenzyme. Formation of the active enzyme involves a self-maturation process in which the active site pyruvoyl group is generated from an internal serine residue via an autocatalytic post-translational modification. Two non-identical subunits are generated from the proenzyme in this reaction, and the pyruvate is formed at the N-terminus of the alpha chain, which is derived from the carboxyl end of the proenzyme. The post-translation cleavage follows an unusual pathway, termed non-hydrolytic serinolysis, in which the side chain hydroxyl group of the serine supplies its oxygen atom to form the C-terminus of the beta chain, while the remainder of the serine residue undergoes an oxidative deamination to produce ammonia and the pyruvoyl group blocking the N-terminus of the alpha chain.

It catalyses the reaction S-adenosyl-L-methionine + H(+) = S-adenosyl 3-(methylsulfanyl)propylamine + CO2. It participates in amine and polyamine biosynthesis; S-adenosylmethioninamine biosynthesis; S-adenosylmethioninamine from S-adenosyl-L-methionine: step 1/1. Its function is as follows. Catalyzes the decarboxylation of S-adenosylmethionine to S-adenosylmethioninamine (dcAdoMet), the propylamine donor required for the synthesis of the polyamines spermine and spermidine from the diamine putrescine. The chain is S-adenosylmethionine decarboxylase proenzyme from Thermodesulfovibrio yellowstonii (strain ATCC 51303 / DSM 11347 / YP87).